The chain runs to 255 residues: uncharacterized protein (255 aa).

This sequence belongs to the methyltransferase superfamily.

This is an uncharacterized protein from Bacillus subtilis (strain 168).